The sequence spans 163 residues: RRM-domain-containing protein ECU01_0840 (163 aa).

The 80-residue stretch at 84-163 (CSVKLSNLPL…SLGLSAEIAR (80 aa)) folds into the RRM domain.

The sequence is that of RRM-domain-containing protein ECU01_0840 from Encephalitozoon cuniculi (strain GB-M1) (Microsporidian parasite).